The chain runs to 288 residues: N-acetylneuraminate lyase (288 aa).

The aceneuramate site is built by serine 44 and threonine 45. Residue tyrosine 133 is the Proton donor of the active site. The active-site Schiff-base intermediate with substrate is the lysine 161. Residues threonine 163, glycine 185, aspartate 187, glutamate 188, and serine 204 each coordinate aceneuramate.

Belongs to the DapA family. NanA subfamily. As to quaternary structure, homotetramer.

It localises to the cytoplasm. The enzyme catalyses aceneuramate = aldehydo-N-acetyl-D-mannosamine + pyruvate. It participates in amino-sugar metabolism; N-acetylneuraminate degradation; D-fructose 6-phosphate from N-acetylneuraminate: step 1/5. In terms of biological role, catalyzes the reversible aldol cleavage of N-acetylneuraminic acid (sialic acid; Neu5Ac) to form pyruvate and N-acetylmannosamine (ManNAc) via a Schiff base intermediate. This is N-acetylneuraminate lyase from Clostridium perfringens (strain SM101 / Type A).